The chain runs to 739 residues: Glycine--tRNA ligase (739 aa).

A mitochondrion-targeting transit peptide spans 1–36 (MPSPRPVLLRGARAALLLLLPPRLLARPSLLLRRSL). Residue S35 is modified to Phosphoserine. The WHEP-TRS domain maps to 63-119 (VLAPLRLAVRQQGDLVRKLKEDKAPQVDVDKAVAELKARKRVLEAKELALQPKDDIV). An N6-acetyllysine modification is found at K204. E299 is a glycine binding site. ATP contacts are provided by residues 331–333 (RNE) and 342–343 (RV). E350 is a binding site for glycine. A Phosphotyrosine modification is found at Y453. 457–458 (EI) lines the ATP pocket. K501 carries the N6-acetyllysine modification. 576–578 (EPS) contributes to the glycine binding site. R583 is an ATP binding site. A Phosphoserine modification is found at S700. T736 is modified (phosphothreonine).

The protein belongs to the class-II aminoacyl-tRNA synthetase family. As to quaternary structure, homodimer. Widely expressed, including in brain and spinal cord. In terms of tissue distribution, expressed in brain, spinal cord, muscle, heart and spleen. As to expression, expressed in brain, spinal cord, muscle, heart, spleen and liver.

The protein localises to the cytoplasm. Its subcellular location is the cell projection. It is found in the axon. The protein resides in the secreted. It localises to the extracellular exosome. The protein localises to the mitochondrion. The catalysed reaction is tRNA(Gly) + glycine + ATP = glycyl-tRNA(Gly) + AMP + diphosphate. It carries out the reaction 2 ATP + H(+) = P(1),P(4)-bis(5'-adenosyl) tetraphosphate + diphosphate. Ap4A synthesis is inhibited by tRNA, via the disruption of the second ATP-binding site by direct blocking and/or by tRNA-induced conformational change. Catalyzes the ATP-dependent ligation of glycine to the 3'-end of its cognate tRNA, via the formation of an aminoacyl-adenylate intermediate (Gly-AMP). Also produces diadenosine tetraphosphate (Ap4A), a universal pleiotropic signaling molecule needed for cell regulation pathways, by direct condensation of 2 ATPs. Thereby, may play a special role in Ap4A homeostasis. This chain is Glycine--tRNA ligase, found in Homo sapiens (Human).